Reading from the N-terminus, the 269-residue chain is Diaminopimelate epimerase (269 aa).

3 residues coordinate substrate: N13, Q47, and N65. The active-site Proton donor is the C74. Residues 75-76 (GN), N149, N182, and 200-201 (ER) each bind substrate. Catalysis depends on C209, which acts as the Proton acceptor. Residue 210-211 (GT) participates in substrate binding.

This sequence belongs to the diaminopimelate epimerase family. As to quaternary structure, homodimer.

The protein localises to the cytoplasm. It carries out the reaction (2S,6S)-2,6-diaminopimelate = meso-2,6-diaminopimelate. It participates in amino-acid biosynthesis; L-lysine biosynthesis via DAP pathway; DL-2,6-diaminopimelate from LL-2,6-diaminopimelate: step 1/1. Catalyzes the stereoinversion of LL-2,6-diaminopimelate (L,L-DAP) to meso-diaminopimelate (meso-DAP), a precursor of L-lysine and an essential component of the bacterial peptidoglycan. In Erythrobacter litoralis (strain HTCC2594), this protein is Diaminopimelate epimerase.